Reading from the N-terminus, the 63-residue chain is Cypmaclein (63 aa).

It belongs to the GASA family. As to expression, expressed in pollen (at protein level).

In Cryptomeria japonica (Japanese cedar), this protein is Cypmaclein.